The chain runs to 600 residues: Glutamine--fructose-6-phosphate aminotransferase [isomerizing] (600 aa).

Residue cysteine 2 is the Nucleophile; for GATase activity of the active site. The region spanning 2–217 (CGIVGFIGEQ…DKEIVIVMKE (216 aa)) is the Glutamine amidotransferase type-2 domain. 2 consecutive SIS domains span residues 283–422 (IRNA…AKGE) and 452–590 (LAKQ…VDKP). The active-site For Fru-6P isomerization activity is lysine 595.

In terms of assembly, homodimer.

It is found in the cytoplasm. The catalysed reaction is D-fructose 6-phosphate + L-glutamine = D-glucosamine 6-phosphate + L-glutamate. Functionally, catalyzes the first step in hexosamine metabolism, converting fructose-6P into glucosamine-6P using glutamine as a nitrogen source. The sequence is that of Glutamine--fructose-6-phosphate aminotransferase [isomerizing] from Bacillus anthracis.